Consider the following 440-residue polypeptide: 23S rRNA (uracil(1939)-C(5))-methyltransferase RlmD (440 aa).

The TRAM domain occupies 11 to 69 (STLDTKHQPVTIERLDHQGSGLAFLHKKPLFVDGALPGEEVLIQLTENKSKYARGQLIK). 4 residues coordinate [4Fe-4S] cluster: Cys-82, Cys-88, Cys-91, and Cys-169. S-adenosyl-L-methionine contacts are provided by Gln-272, Phe-301, Asn-306, Glu-322, Asn-349, and Asp-370. Catalysis depends on Cys-396, which acts as the Nucleophile.

It belongs to the class I-like SAM-binding methyltransferase superfamily. RNA M5U methyltransferase family. RlmD subfamily.

The enzyme catalyses uridine(1939) in 23S rRNA + S-adenosyl-L-methionine = 5-methyluridine(1939) in 23S rRNA + S-adenosyl-L-homocysteine + H(+). Functionally, catalyzes the formation of 5-methyl-uridine at position 1939 (m5U1939) in 23S rRNA. The protein is 23S rRNA (uracil(1939)-C(5))-methyltransferase RlmD of Vibrio cholerae serotype O1 (strain ATCC 39541 / Classical Ogawa 395 / O395).